The chain runs to 148 residues: Macrodomain Ter protein (148 aa).

This sequence belongs to the MatP family. Homodimer.

It is found in the cytoplasm. Its function is as follows. Required for spatial organization of the terminus region of the chromosome (Ter macrodomain) during the cell cycle. Prevents early segregation of duplicated Ter macrodomains during cell division. Binds specifically to matS, which is a 13 bp signature motif repeated within the Ter macrodomain. The polypeptide is Macrodomain Ter protein (Haemophilus influenzae (strain 86-028NP)).